The following is a 343-amino-acid chain: Calcium/calmodulin-dependent protein kinase type 1B (343 aa).

Residues 15-270 (YEIRERLGSG…CQQALRHLWI (256 aa)) enclose the Protein kinase domain. ATP-binding positions include 21–29 (LGSGAFSEV) and lysine 44. Aspartate 136 (proton acceptor) is an active-site residue. Residues 290–311 (KNFARTHWKRAFNATSFLRHIR) form a calmodulin-binding region. The tract at residues 319–343 (GEGASEQGMARHSHSGLRAGQPPKW) is disordered.

The protein belongs to the protein kinase superfamily. CAMK Ser/Thr protein kinase family. CaMK subfamily. Post-translationally, phosphorylated by CAMKK1.

It is found in the cytoplasm. It localises to the nucleus. It carries out the reaction L-seryl-[protein] + ATP = O-phospho-L-seryl-[protein] + ADP + H(+). The enzyme catalyses L-threonyl-[protein] + ATP = O-phospho-L-threonyl-[protein] + ADP + H(+). With respect to regulation, activated by Ca(2+)/calmodulin. Its function is as follows. Calcium/calmodulin-dependent protein kinase belonging to a proposed calcium-triggered signaling cascade. In vitro phosphorylates CREB1 and SYN1/synapsin I. Phosphorylates and activates CAMK1. The chain is Calcium/calmodulin-dependent protein kinase type 1B (PNCK) from Homo sapiens (Human).